Consider the following 205-residue polypeptide: Glycerol-3-phosphate acyltransferase (205 aa).

6 helical membrane passes run 7 to 27 (MTAL…VWVC), 54 to 74 (VVPA…VLWV), 80 to 100 (LPIW…SYPL), 116 to 136 (VLLM…ALLA), 141 to 161 (TAAV…YWLA), and 163 to 183 (EATL…AWNI).

It belongs to the PlsY family. In terms of assembly, probably interacts with PlsX.

It localises to the cell inner membrane. The enzyme catalyses an acyl phosphate + sn-glycerol 3-phosphate = a 1-acyl-sn-glycero-3-phosphate + phosphate. It participates in lipid metabolism; phospholipid metabolism. In terms of biological role, catalyzes the transfer of an acyl group from acyl-phosphate (acyl-PO(4)) to glycerol-3-phosphate (G3P) to form lysophosphatidic acid (LPA). This enzyme utilizes acyl-phosphate as fatty acyl donor, but not acyl-CoA or acyl-ACP. In Chromohalobacter salexigens (strain ATCC BAA-138 / DSM 3043 / CIP 106854 / NCIMB 13768 / 1H11), this protein is Glycerol-3-phosphate acyltransferase.